The chain runs to 400 residues: MGGWSSKPRKGMGTNLSVPNPLGFFPDHQLDPAFKANSENPDWDLNPHKDNWPDANKVGVGAFGPGFTPPHGGLLGWSPQAQGLLTTVPAAPPPASTNRQSGRQPTPFSPPLRDTHPQAMQWNSTTFLQTLQDSRVRALYLPAGGSSSGTVSPAQNTVSAISSISSKTGDPVPNMENIASGLLGHLLVLQAGFFSLTKILTIPQSLDSWWTSLNFLGGTPACPGQNSQSQISSHSPTCCPPICPGYRWMCLRRFIIFLCILLLCLIFLLVLLDYQGMLPVCPLTPGSTTTSTGPCKTCTTPAQGTSMFPSCCCTKPTDGNCTCIPIPSSWAFAKYLWGWASVRFSWLSLLVPFVQWFVGLSPTVWLSVIWMMWFWGPSLYNILRPFMPLLPTFFCLWVYI.

Met1 carries the post-translational modification N-acetylmethionine. Disordered stretches follow at residues Met1–Phe24 and Thr86–Asp114. Gly2 carries N-myristoyl glycine; by host lipidation. A pre-S1 region spans residues Gly2–Ala119. Residues Gly2 to Asn174 are pre-S. Residues Gly2–Gly181 are Virion surface; in external conformation-facing. The Intravirion; in internal conformation segment spans residues Gly2 to Arg253. Trp4 is a glycosylation site (N-linked (GlcNAc...) asparagine). The span at Ser96–Thr106 shows a compositional bias: polar residues. The tract at residues Met120–Asn174 is pre-S2. A helical transmembrane segment spans residues Leu182 to Ile202. The Intravirion; in external conformation portion of the chain corresponds to Pro203–Arg253. A helical membrane pass occupies residues Phe254–Tyr274. At Gln275 to Ser348 the chain is on the virion surface side. Asn320 carries N-linked (GlcNAc...) asparagine; by host glycosylation. A helical membrane pass occupies residues Leu349 to Ile369. Residues Trp370–Trp375 lie on the Intravirion side of the membrane. A helical membrane pass occupies residues Gly376–Val398. Topologically, residues Tyr399–Ile400 are virion surface.

It belongs to the orthohepadnavirus major surface antigen family. As to quaternary structure, interacts (via its myristoylated pre-S1 region) with the host SLC10A1/NTCP; this interaction is essential for viral entry. In terms of assembly, in its internal form (Li-HBsAg), interacts with the capsid protein and with the isoform S. Interacts with host chaperone CANX. Associates with host chaperone CANX through its pre-S2 N glycan; this association may be essential for isoform M proper secretion. As to quaternary structure, interacts with isoform L. Interacts with the antigens of satellite virus HDV (HDVAgs); this interaction is required for encapsidation of HDV genomic RNA. Post-translationally, isoform M is N-terminally acetylated by host at a ratio of 90%, and N-glycosylated by host at the pre-S2 region. Myristoylated; this modification is essential for its interaction with the host protein SLC10A1/NTCP.

The protein localises to the virion membrane. Functionally, the large envelope protein exists in two topological conformations, one which is termed 'external' or Le-HBsAg and the other 'internal' or Li-HBsAg. In its external conformation the protein attaches the virus to cell receptors and thereby initiating infection. This interaction determines the species specificity and liver tropism. This attachment induces virion internalization predominantly through caveolin-mediated endocytosis. The large envelope protein also assures fusion between virion membrane and endosomal membrane. In its internal conformation the protein plays a role in virion morphogenesis and mediates the contact with the nucleocapsid like a matrix protein. The middle envelope protein plays an important role in the budding of the virion. It is involved in the induction of budding in a nucleocapsid independent way. In this process the majority of envelope proteins bud to form subviral lipoprotein particles of 22 nm of diameter that do not contain a nucleocapsid. This is Large envelope protein from Hepatitis B virus genotype B2 subtype adw (isolate China/patient4/1996) (HBV-B).